The sequence spans 378 residues: MGQSKKLNKQPSSLSPLVQLAGIRKCFDGKEVIPQLDLTINNGEFLTLLGPSGCGKTTVLRLIAGLETVDSGRIMLDNEDITHVPAENRYVNTVFQSYALFPHMTVFENVAFGLRMQKTPAAEITPRVMEALRMVQLETFAQRKPHQLSGGQQQRVAIARAVVNKPRLLLLDESLSALDYKLRKQMQNELKALQRKLGITFVFVTHDQEEALTMSDRIVMMRDGRIEQDGTPRDIYEEPKNLFVTGFIAEIHMFNATVIERLDEQRVRANVEGRECNIYVNFAVEPGQKLHVLLRPEDLRVEEINDDNHAEGLIGYVRERNYKGMTLESVVELENGKMVMVSEFFNEDDPDFDHSLDQKMAINWVESWEVVLADEEHK.

The region spanning 18-248 (VQLAGIRKCF…PKNLFVTGFI (231 aa)) is the ABC transporter domain. 50-57 (GPSGCGKT) contacts ATP.

Belongs to the ABC transporter superfamily. Spermidine/putrescine importer (TC 3.A.1.11.1) family. The complex is composed of two ATP-binding proteins (PotA), two transmembrane proteins (PotB and PotC) and a solute-binding protein (PotD).

The protein localises to the cell inner membrane. The enzyme catalyses ATP + H2O + polyamine-[polyamine-binding protein]Side 1 = ADP + phosphate + polyamineSide 2 + [polyamine-binding protein]Side 1.. In terms of biological role, part of the ABC transporter complex PotABCD involved in spermidine/putrescine import. Responsible for energy coupling to the transport system. The polypeptide is Spermidine/putrescine import ATP-binding protein PotA (Shigella flexneri serotype 5b (strain 8401)).